The primary structure comprises 1011 residues: Translation initiation factor IF-2 (1011 aa).

Basic and acidic residues predominate over residues 49-77 (YIHEHGTEESPRRRSAGEDEFKPKIDLSK). Disordered stretches follow at residues 49–152 (YIHE…RFIT) and 187–407 (AAPA…LSLS). A compositionally biased stretch (pro residues) spans 93–104 (APPPPPPPPPRP). Low complexity predominate over residues 105 to 115 (AVKAPSPVSQE). The span at 116–126 (PRPPAVPPAPQ) shows a compositional bias: pro residues. Composition is skewed to low complexity over residues 187 to 212 (AAPA…KAPV) and 228 to 242 (TAKP…AATP). Pro residues-rich tracts occupy residues 243 to 252 (APTPGRPLPG) and 276 to 290 (SAPP…PPPQ). Positions 316–329 (GPGGGSGGPGGFQR) are enriched in gly residues. Over residues 361–380 (LAPPGAPANKPAGRPAPARR) the composition is skewed to low complexity. The tr-type G domain occupies 502 to 678 (VRPPVVTIMG…CLVADLGDLK (177 aa)). The interval 511 to 518 (GHVDHGKT) is G1. 511 to 518 (GHVDHGKT) lines the GTP pocket. Residues 536–540 (GITQH) form a G2 region. The interval 564 to 567 (DTPG) is G3. Residues 564-568 (DTPGH) and 618-621 (NKID) contribute to the GTP site. The segment at 618 to 621 (NKID) is G4. Positions 654-656 (SAK) are G5.

It belongs to the TRAFAC class translation factor GTPase superfamily. Classic translation factor GTPase family. IF-2 subfamily.

It localises to the cytoplasm. Its function is as follows. One of the essential components for the initiation of protein synthesis. Protects formylmethionyl-tRNA from spontaneous hydrolysis and promotes its binding to the 30S ribosomal subunits. Also involved in the hydrolysis of GTP during the formation of the 70S ribosomal complex. The sequence is that of Translation initiation factor IF-2 from Koribacter versatilis (strain Ellin345).